A 204-amino-acid polypeptide reads, in one-letter code: ATP phosphoribosyltransferase (204 aa).

The protein belongs to the ATP phosphoribosyltransferase family. Short subfamily.

Its subcellular location is the cytoplasm. The catalysed reaction is 1-(5-phospho-beta-D-ribosyl)-ATP + diphosphate = 5-phospho-alpha-D-ribose 1-diphosphate + ATP. It functions in the pathway amino-acid biosynthesis; L-histidine biosynthesis; L-histidine from 5-phospho-alpha-D-ribose 1-diphosphate: step 1/9. Functionally, catalyzes the condensation of ATP and 5-phosphoribose 1-diphosphate to form N'-(5'-phosphoribosyl)-ATP (PR-ATP). Has a crucial role in the pathway because the rate of histidine biosynthesis seems to be controlled primarily by regulation of HisG enzymatic activity. The sequence is that of ATP phosphoribosyltransferase (hisG) from Pyrococcus furiosus (strain ATCC 43587 / DSM 3638 / JCM 8422 / Vc1).